The sequence spans 159 residues: Phosphopantetheine adenylyltransferase (159 aa).

Ser9 contributes to the substrate binding site. Residues 9 to 10 (SF) and His17 contribute to the ATP site. Residues Lys41, Ile73, and Lys87 each contribute to the substrate site. ATP contacts are provided by residues 88–90 (GLR), Glu98, and 122–128 (WGYVSSS).

The protein belongs to the bacterial CoaD family. As to quaternary structure, homohexamer. Mg(2+) serves as cofactor.

The protein localises to the cytoplasm. The enzyme catalyses (R)-4'-phosphopantetheine + ATP + H(+) = 3'-dephospho-CoA + diphosphate. It functions in the pathway cofactor biosynthesis; coenzyme A biosynthesis; CoA from (R)-pantothenate: step 4/5. In terms of biological role, reversibly transfers an adenylyl group from ATP to 4'-phosphopantetheine, yielding dephospho-CoA (dPCoA) and pyrophosphate. The polypeptide is Phosphopantetheine adenylyltransferase (Nocardioides sp. (strain ATCC BAA-499 / JS614)).